The sequence spans 270 residues: 4-hydroxy-tetrahydrodipicolinate reductase (270 aa).

NAD(+)-binding positions include 11 to 16 and glutamate 37; that span reads GAGGRM. Residue arginine 38 participates in NADP(+) binding. Residues 101–103 and 125–128 contribute to the NAD(+) site; these read GTT and APNM. Residue histidine 158 is the Proton donor/acceptor of the active site. Histidine 159 serves as a coordination point for (S)-2,3,4,5-tetrahydrodipicolinate. Catalysis depends on lysine 162, which acts as the Proton donor. Position 168–169 (168–169) interacts with (S)-2,3,4,5-tetrahydrodipicolinate; that stretch reads GT.

The protein belongs to the DapB family.

It is found in the cytoplasm. The catalysed reaction is (S)-2,3,4,5-tetrahydrodipicolinate + NAD(+) + H2O = (2S,4S)-4-hydroxy-2,3,4,5-tetrahydrodipicolinate + NADH + H(+). It catalyses the reaction (S)-2,3,4,5-tetrahydrodipicolinate + NADP(+) + H2O = (2S,4S)-4-hydroxy-2,3,4,5-tetrahydrodipicolinate + NADPH + H(+). The protein operates within amino-acid biosynthesis; L-lysine biosynthesis via DAP pathway; (S)-tetrahydrodipicolinate from L-aspartate: step 4/4. In terms of biological role, catalyzes the conversion of 4-hydroxy-tetrahydrodipicolinate (HTPA) to tetrahydrodipicolinate. This chain is 4-hydroxy-tetrahydrodipicolinate reductase, found in Shewanella baltica (strain OS223).